Reading from the N-terminus, the 89-residue chain is Meiosis expressed gene 1 protein homolog (89 aa).

This sequence belongs to the MEIG1 family.

The polypeptide is Meiosis expressed gene 1 protein homolog (Nematostella vectensis (Starlet sea anemone)).